We begin with the raw amino-acid sequence, 386 residues long: Galactokinase (386 aa).

32–35 (EHTD) lines the substrate pocket. ATP-binding positions include Ser-66 and 123–129 (GASLSSS). Residues Ser-129 and Glu-161 each coordinate Mg(2+). The Proton acceptor role is filled by Asp-173. Tyr-223 is a binding site for substrate.

The protein belongs to the GHMP kinase family. GalK subfamily.

It localises to the cytoplasm. The catalysed reaction is alpha-D-galactose + ATP = alpha-D-galactose 1-phosphate + ADP + H(+). It functions in the pathway carbohydrate metabolism; galactose metabolism. Catalyzes the transfer of the gamma-phosphate of ATP to D-galactose to form alpha-D-galactose-1-phosphate (Gal-1-P). The protein is Galactokinase of Staphylococcus saprophyticus subsp. saprophyticus (strain ATCC 15305 / DSM 20229 / NCIMB 8711 / NCTC 7292 / S-41).